A 150-amino-acid chain; its full sequence is MSTVPVVQGAGSSNSAQDISTRPLTLKERISNLLSSTAFKVGLVVIGLLLVIATLIFLVSAASFVNAIYLVAIPAILGCVNICVGILSMEGHCSPERWILCKKVLKTSEDIIDDGQINNSNKVFTDERLNAIGGVVESLSRRNSLVDQTQ.

2 consecutive transmembrane segments (helical) span residues 41–61 (VGLV…LVSA) and 67–87 (AIYL…VGIL).

The protein resides in the membrane. This is Sulfur-rich protein, serovar D (srp) from Chlamydia trachomatis serovar D (strain ATCC VR-885 / DSM 19411 / UW-3/Cx).